The sequence spans 103 residues: INTHEKKAQLDLYNEIALEHGHDIQNIDHCLSYITSVDHDSQRAKDICRQFLAHWYDSYVNATRIFDDSDQTKGYDFNKGQWRDFVLKGHRDTNRRIDYSYEI.

As to quaternary structure, heterodimer of an alpha and a beta chain.

The catalysed reaction is a long-chain fatty aldehyde + FMNH2 + O2 = a long-chain fatty acid + hnu + FMN + H2O + 2 H(+). Light-emitting reaction in luminous bacteria. The protein is Alkanal monooxygenase alpha chain (luxA) of Vibrio cholerae.